Here is a 201-residue protein sequence, read N- to C-terminus: Recombination protein RecR (201 aa).

The segment at 60 to 75 (CSVCGNVDTTDPCSIC) adopts a C4-type zinc-finger fold. A Toprim domain is found at 83-178 (TTIIVVEDVA…KITRLAHGVP (96 aa)).

Belongs to the RecR family.

Its function is as follows. May play a role in DNA repair. It seems to be involved in an RecBC-independent recombinational process of DNA repair. It may act with RecF and RecO. This Bartonella quintana (strain Toulouse) (Rochalimaea quintana) protein is Recombination protein RecR.